The sequence spans 64 residues: MRLHRLLLVFLLMVLLPVPGLLKNIGNSVSCLRNKGVCMPGKCAPKMKQIGTCGMPQVKCCKRK.

A signal peptide spans 1-20 (MRLHRLLLVFLLMVLLPVPG). Positions 21–23 (LLK) are excised as a propeptide. 3 disulfides stabilise this stretch: Cys-31–Cys-60, Cys-38–Cys-53, and Cys-43–Cys-61.

Belongs to the beta-defensin family. As to quaternary structure, monomer. Homodimer.

It localises to the secreted. The protein resides in the membrane. In terms of biological role, has bactericidal activity. May act as a ligand for C-C chemokine receptor CCR6. Positively regulates the sperm motility and bactericidal activity in a CCR6-dependent manner. Binds to CCR6 and triggers Ca2+ mobilization in the sperm which is important for its motility. The polypeptide is Beta-defensin 1 (DEFB1) (Sus scrofa (Pig)).